Consider the following 320-residue polypeptide: MSKSESPKEPEQLRKLFIGGLSFETTDESLRSHFEQWGTLTDCVVMRDPNTKRSRGFGFVTYATVEEVDAAMNARPHKVDGRVVEPKRAVSREDSQRPGAHLTVKKIFVGGIKEDTEEHHLRDYFEQYGKIEVIEIMTDRGSGKKRGFAFVTFDDHDSVDKIVIQKYHTVNGHNCEVRKALCKQEMASASSSQRGRSGSGNFGGGRGGGFGGNDNFGRGGNFSGRGGFGGSRGGGGYGGSGDGYNGFGNDGSNFGGGGSYNDFGNYNNQSSNFGPMKGGNFGGRSSGPYGGGGQYFAKPRNQGGYGGSSSSSSYGSGRRF.

Met1 bears the N-acetylmethionine mark. At Ser2 the chain carries N-acetylserine; in Heterogeneous nuclear ribonucleoprotein A1, N-terminally processed. Ser2 carries the post-translational modification Phosphoserine. Lys3 carries the N6-acetyllysine; alternate modification. A Glycyl lysine isopeptide (Lys-Gly) (interchain with G-Cter in SUMO2); alternate cross-link involves residue Lys3. Residues Ser4 and Ser6 each carry the phosphoserine modification. Positions 4–94 are globular A domain; sequence SESPKEPEQL…EPKRAVSRED (91 aa). A Glycyl lysine isopeptide (Lys-Gly) (interchain with G-Cter in SUMO2) cross-link involves residue Lys8. RRM domains are found at residues 14–97 and 105–184; these read RKLF…DSQR and KKIF…LCKQ. Ser22 carries the phosphoserine modification. Residue Lys78 forms a Glycyl lysine isopeptide (Lys-Gly) (interchain with G-Cter in SUMO2) linkage. Residues 95–185 are globular B domain; that stretch reads SQRPGAHLTV…EVRKALCKQE (91 aa). A Glycyl lysine isopeptide (Lys-Gly) (interchain with G-Cter in SUMO) cross-link involves residue Lys113. Residues Lys179 and Lys183 each participate in a glycyl lysine isopeptide (Lys-Gly) (interchain with G-Cter in SUMO2) cross-link. The segment at 188–216 is disordered; the sequence is SASSSQRGRSGSGNFGGGRGGGFGGNDNF. Ser192 bears the Phosphoserine; by MKNK2 mark. Position 194 is an asymmetric dimethylarginine; alternate (Arg194). Position 194 is a dimethylated arginine; alternate (Arg194). Arg194 carries the omega-N-methylarginine; alternate modification. Positions 197 to 216 are enriched in gly residues; that stretch reads SGSGNFGGGRGGGFGGNDNF. Position 199 is a phosphoserine (Ser199). Asymmetric dimethylarginine; alternate is present on residues Arg206, Arg218, Arg225, and Arg232. Arg206 carries the dimethylated arginine; alternate modification. 4 positions are modified to omega-N-methylarginine; alternate: Arg206, Arg218, Arg225, and Arg232. The tract at residues 218–240 is RNA-binding RGG-box; that stretch reads RGGNFSGRGGFGGSRGGGGYGGS. Dimethylated arginine; alternate is present on Arg225. Positions 268-305 are nuclear targeting sequence; sequence NQSSNFGPMKGGNFGGRSSGPYGGGGQYFAKPRNQGGY. A disordered region spans residues 271–320; that stretch reads SNFGPMKGGNFGGRSSGPYGGGGQYFAKPRNQGGYGGSSSSSSYGSGRRF. Residues 276–294 are compositionally biased toward gly residues; it reads MKGGNFGGRSSGPYGGGGQ. Arg284 bears the Omega-N-methylarginine mark. Ser285 is modified (phosphoserine). An N6-acetyllysine; alternate modification is found at Lys298. Lys298 is covalently cross-linked (Glycyl lysine isopeptide (Lys-Gly) (interchain with G-Cter in SUMO2); alternate). Position 300 is an omega-N-methylarginine (Arg300). Over residues 308-320 the composition is skewed to low complexity; the sequence is SSSSSSYGSGRRF. Residue Ser309 is modified to Phosphoserine. 3 positions are modified to phosphoserine; by MKNK2: Ser310, Ser311, and Ser312. Residues Ser313 and Ser316 each carry the phosphoserine modification. The residue at position 318 (Arg318) is an Omega-N-methylarginine.

Identified in the spliceosome C complex. Identified in a IGF2BP1-dependent mRNP granule complex containing untranslated mRNAs. Interacts with SEPT6. Interacts with C9orf72. Interacts with KHDRBS1. Interacts with UBQLN2. Interacts with PPIA/CYPA. Sumoylated.

It localises to the nucleus. The protein resides in the cytoplasm. Its function is as follows. Involved in the packaging of pre-mRNA into hnRNP particles, transport of poly(A) mRNA from the nucleus to the cytoplasm and modulation of splice site selection. Plays a role in the splicing of pyruvate kinase PKM by binding repressively to sequences flanking PKM exon 9, inhibiting exon 9 inclusion and resulting in exon 10 inclusion and production of the PKM M2 isoform. Binds to the IRES and thereby inhibits the translation of the apoptosis protease activating factor APAF1. May bind to specific miRNA hairpins. The sequence is that of Heterogeneous nuclear ribonucleoprotein A1 (Hnrnpa1) from Rattus norvegicus (Rat).